A 361-amino-acid polypeptide reads, in one-letter code: Molybdenum import ATP-binding protein ModC (361 aa).

Residues 1 to 228 (MLTINIEKQL…EQMRPWVPLQ (228 aa)) form the ABC transporter domain. 31 to 38 (GRSGAGKT) serves as a coordination point for ATP. The 68-residue stretch at 289-356 (RSSIRNVLKG…IKGVTMTQMD (68 aa)) folds into the Mop domain.

Belongs to the ABC transporter superfamily. Molybdate importer (TC 3.A.1.8) family. In terms of assembly, the complex is composed of two ATP-binding proteins (ModC), two transmembrane proteins (ModB) and a solute-binding protein (ModA).

The protein localises to the cell inner membrane. The catalysed reaction is molybdate(out) + ATP + H2O = molybdate(in) + ADP + phosphate + H(+). Part of the ABC transporter complex ModABC involved in molybdenum import. Responsible for energy coupling to the transport system. The chain is Molybdenum import ATP-binding protein ModC from Shewanella oneidensis (strain ATCC 700550 / JCM 31522 / CIP 106686 / LMG 19005 / NCIMB 14063 / MR-1).